A 358-amino-acid polypeptide reads, in one-letter code: tRNA-specific 2-thiouridylase MnmA (358 aa).

ATP contacts are provided by residues 6–13 (AMSGGVDS) and Leu32. Cys101 acts as the Nucleophile in catalysis. An intrachain disulfide couples Cys101 to Cys193. Gly125 contacts ATP. Residues 143–145 (KDQ) form an interaction with tRNA region. The active-site Cysteine persulfide intermediate is Cys193.

It belongs to the MnmA/TRMU family.

It is found in the cytoplasm. The enzyme catalyses S-sulfanyl-L-cysteinyl-[protein] + uridine(34) in tRNA + AH2 + ATP = 2-thiouridine(34) in tRNA + L-cysteinyl-[protein] + A + AMP + diphosphate + H(+). Catalyzes the 2-thiolation of uridine at the wobble position (U34) of tRNA, leading to the formation of s(2)U34. This chain is tRNA-specific 2-thiouridylase MnmA, found in Mycobacterium leprae (strain Br4923).